The chain runs to 240 residues: Pyridoxine 5'-phosphate synthase (240 aa).

N7 lines the 3-amino-2-oxopropyl phosphate pocket. A 1-deoxy-D-xylulose 5-phosphate-binding site is contributed by 9–10 (DH). Residue R18 coordinates 3-amino-2-oxopropyl phosphate. Residue H43 is the Proton acceptor of the active site. 2 residues coordinate 1-deoxy-D-xylulose 5-phosphate: R45 and H50. E70 (proton acceptor) is an active-site residue. Position 100 (T100) interacts with 1-deoxy-D-xylulose 5-phosphate. The Proton donor role is filled by H191. 3-amino-2-oxopropyl phosphate-binding positions include G192 and 213–214 (GH).

Belongs to the PNP synthase family. As to quaternary structure, homooctamer; tetramer of dimers.

Its subcellular location is the cytoplasm. It carries out the reaction 3-amino-2-oxopropyl phosphate + 1-deoxy-D-xylulose 5-phosphate = pyridoxine 5'-phosphate + phosphate + 2 H2O + H(+). Its pathway is cofactor biosynthesis; pyridoxine 5'-phosphate biosynthesis; pyridoxine 5'-phosphate from D-erythrose 4-phosphate: step 5/5. Its function is as follows. Catalyzes the complicated ring closure reaction between the two acyclic compounds 1-deoxy-D-xylulose-5-phosphate (DXP) and 3-amino-2-oxopropyl phosphate (1-amino-acetone-3-phosphate or AAP) to form pyridoxine 5'-phosphate (PNP) and inorganic phosphate. This chain is Pyridoxine 5'-phosphate synthase, found in Synechococcus elongatus (strain ATCC 33912 / PCC 7942 / FACHB-805) (Anacystis nidulans R2).